The sequence spans 199 residues: Proteasome subunit beta type-2 (199 aa).

Belongs to the peptidase T1B family. The 26S proteasome consists of a 20S proteasome core and two 19S regulatory subunits. The 20S proteasome core is composed of 28 subunits that are arranged in four stacked rings, resulting in a barrel-shaped structure. The two end rings are each formed by seven alpha subunits, and the two central rings are each formed by seven beta subunits. The catalytic chamber with the active sites is on the inside of the barrel.

The protein resides in the cytoplasm. The protein localises to the nucleus. Its function is as follows. Non-catalytic component of the proteasome, a multicatalytic proteinase complex which is characterized by its ability to cleave peptides with Arg, Phe, Tyr, Leu, and Glu adjacent to the leaving group at neutral or slightly basic pH. The proteasome has an ATP-dependent proteolytic activity. In Caenorhabditis elegans, this protein is Proteasome subunit beta type-2 (pbs-4).